Here is a 232-residue protein sequence, read N- to C-terminus: Ubiquinone biosynthesis O-methyltransferase (232 aa).

Residues Arg-36, Gly-55, Asp-76, and Leu-120 each contribute to the S-adenosyl-L-methionine site.

Belongs to the methyltransferase superfamily. UbiG/COQ3 family.

It carries out the reaction a 3-demethylubiquinol + S-adenosyl-L-methionine = a ubiquinol + S-adenosyl-L-homocysteine + H(+). The catalysed reaction is a 3-(all-trans-polyprenyl)benzene-1,2-diol + S-adenosyl-L-methionine = a 2-methoxy-6-(all-trans-polyprenyl)phenol + S-adenosyl-L-homocysteine + H(+). It participates in cofactor biosynthesis; ubiquinone biosynthesis. Functionally, O-methyltransferase that catalyzes the 2 O-methylation steps in the ubiquinone biosynthetic pathway. In Pseudomonas aeruginosa (strain ATCC 15692 / DSM 22644 / CIP 104116 / JCM 14847 / LMG 12228 / 1C / PRS 101 / PAO1), this protein is Ubiquinone biosynthesis O-methyltransferase.